We begin with the raw amino-acid sequence, 390 residues long: RNA binding protein fox-1 homolog 2 (390 aa).

Residues 1–127 (MQNEPLTPGY…STPKRLHVSN (127 aa)) form a disordered region. 2 stretches are compositionally biased toward polar residues: residues 18–28 (SQGNQEPTTTP) and 65–95 (GEHN…SLTT). Phosphothreonine is present on H67. Positions 97–117 (GGAQTDGQQSQTQSSENSESK) are enriched in low complexity. The region spanning 121-197 (KRLHVSNIPF…RKIEVNNATA (77 aa)) is the RRM domain. Omega-N-methylarginine is present on residues G249, G267, F268, A277, and R281. Asymmetric dimethylarginine is present on residues R297 and R329. R381 and R386 each carry asymmetric dimethylarginine; alternate. 2 positions are modified to omega-N-methylarginine; alternate: R381 and R386.

In terms of assembly, interacts with ER-alpha N-terminal activation domain. Interacts with RBPMS; the interaction allows cooperative assembly of stable cell-specific alternative splicing regulatory complexes.

It localises to the nucleus. Its subcellular location is the cytoplasm. Functionally, RNA-binding protein that regulates alternative splicing events by binding to 5'-UGCAUGU-3' elements. Prevents binding of U2AF2 to the 3'-splice site. Regulates alternative splicing of tissue-specific exons and of differentially spliced exons during erythropoiesis. RNA-binding protein that seems to act as a coregulatory factor of ER-alpha. Together with RNA binding proteins RBPMS and MBNL1/2, activates vascular smooth muscle cells alternative splicing events. This Homo sapiens (Human) protein is RNA binding protein fox-1 homolog 2 (RBFOX2).